The primary structure comprises 511 residues: 2-isopropylmalate synthase (511 aa).

Positions 6–269 (IIIFDTTLRD…YTDIKCENIS (264 aa)) constitute a Pyruvate carboxyltransferase domain. Mn(2+) contacts are provided by Asp15, His203, His205, and Asn239. The segment at 394 to 511 (VLEKLSVISG…SLKVEERKMA (118 aa)) is regulatory domain.

Belongs to the alpha-IPM synthase/homocitrate synthase family. LeuA type 1 subfamily. In terms of assembly, homodimer. Mn(2+) is required as a cofactor.

The protein localises to the cytoplasm. The catalysed reaction is 3-methyl-2-oxobutanoate + acetyl-CoA + H2O = (2S)-2-isopropylmalate + CoA + H(+). It participates in amino-acid biosynthesis; L-leucine biosynthesis; L-leucine from 3-methyl-2-oxobutanoate: step 1/4. Functionally, catalyzes the condensation of the acetyl group of acetyl-CoA with 3-methyl-2-oxobutanoate (2-ketoisovalerate) to form 3-carboxy-3-hydroxy-4-methylpentanoate (2-isopropylmalate). In Campylobacter jejuni subsp. doylei (strain ATCC BAA-1458 / RM4099 / 269.97), this protein is 2-isopropylmalate synthase.